The chain runs to 70 residues: MKQGIHPDYSATNARCSCGNTFIFQSTMTKDVNLDVCDKCHPFYTGKQRQASSGGRVDKFNKRFGALGSK.

Zn(2+) contacts are provided by Cys16, Cys18, Cys37, and Cys40. A disordered region spans residues 48–70 (QRQASSGGRVDKFNKRFGALGSK).

Belongs to the bacterial ribosomal protein bL31 family. Type A subfamily. Part of the 50S ribosomal subunit. It depends on Zn(2+) as a cofactor.

Binds the 23S rRNA. This Photobacterium profundum (strain SS9) protein is Large ribosomal subunit protein bL31.